The sequence spans 99 residues: NADH-ubiquinone oxidoreductase chain 4L (99 aa).

The next 3 membrane-spanning stretches (helical) occupy residues 5–25 (IITAYKIGTILFLIGILGFII), 30–50 (ILLLIISIEMTLLAISFIIIC), and 65–85 (LYILALAGSEAAIGLSLLVLF).

This sequence belongs to the complex I subunit 4L family.

The protein resides in the mitochondrion membrane. The enzyme catalyses a ubiquinone + NADH + 5 H(+)(in) = a ubiquinol + NAD(+) + 4 H(+)(out). Core subunit of the mitochondrial membrane respiratory chain NADH dehydrogenase (Complex I) that is believed to belong to the minimal assembly required for catalysis. Complex I functions in the transfer of electrons from NADH to the respiratory chain. The immediate electron acceptor for the enzyme is believed to be ubiquinone. This chain is NADH-ubiquinone oxidoreductase chain 4L (ND4L), found in Allomyces macrogynus.